The sequence spans 96 residues: Co-chaperonin GroES (96 aa).

It belongs to the GroES chaperonin family. In terms of assembly, heptamer of 7 subunits arranged in a ring. Interacts with the chaperonin GroEL.

The protein localises to the cytoplasm. Its function is as follows. Together with the chaperonin GroEL, plays an essential role in assisting protein folding. The GroEL-GroES system forms a nano-cage that allows encapsulation of the non-native substrate proteins and provides a physical environment optimized to promote and accelerate protein folding. GroES binds to the apical surface of the GroEL ring, thereby capping the opening of the GroEL channel. The chain is Co-chaperonin GroES from Hydrogenobaculum sp. (strain Y04AAS1).